The following is a 320-amino-acid chain: Olfactory receptor 52W1 (320 aa).

Residues 1–30 (MAETLQLNSTFLHPNFFILTGFPGLGSAQT) are Extracellular-facing. N8 is a glycosylation site (N-linked (GlcNAc...) asparagine). Residues 31-51 (WLTLVFGPIYLLALLGNGALP) form a helical membrane-spanning segment. Topologically, residues 52–59 (AVVWIDST) are cytoplasmic. The chain crosses the membrane as a helical span at residues 60–80 (LHQPMFLLLAILAATDLGLAT). Residues 81–104 (SIAPGLLAVLWLGPRSVPYAVCLV) lie on the Extracellular side of the membrane. A helical transmembrane segment spans residues 105–125 (QMFFVHALTAMESGVLLAMAC). The Cytoplasmic portion of the chain corresponds to 126–144 (DRAAAIGRPLHYPVLVTKA). A helical transmembrane segment spans residues 145-165 (CVGYAALALALKAVAIVVPFP). Residues 166-201 (LLVAKFEHFQAKTIGHTYCAHMAVVELVVGNTQATN) are Extracellular-facing. The helical transmembrane segment at 202–222 (LYGLALSLAISGMDILGITGS) threads the bilayer. Topologically, residues 223–242 (YGLIAHAVLQLPTREAHAKA) are cytoplasmic. Residues 243–263 (FGTCSSHICVILAFYIPGLFS) form a helical membrane-spanning segment. The Extracellular portion of the chain corresponds to 264–279 (YLTHRFGHHTVPKPVH). Residues 280 to 300 (ILLSNIYLLLPPALNPLIYGA) form a helical membrane-spanning segment. The Cytoplasmic portion of the chain corresponds to 301-320 (RTKQIRDRLLETFTFRKSPL).

This sequence belongs to the G-protein coupled receptor 1 family.

It is found in the cell membrane. Its function is as follows. Odorant receptor. This chain is Olfactory receptor 52W1 (OR52W1), found in Homo sapiens (Human).